Reading from the N-terminus, the 336-residue chain is tRNA dimethylallyltransferase (336 aa).

Residue 19 to 26 coordinates ATP; that stretch reads GPTASGKT. 21–26 contributes to the substrate binding site; that stretch reads TASGKT.

It belongs to the IPP transferase family. Monomer. The cofactor is Mg(2+).

The catalysed reaction is adenosine(37) in tRNA + dimethylallyl diphosphate = N(6)-dimethylallyladenosine(37) in tRNA + diphosphate. In terms of biological role, catalyzes the transfer of a dimethylallyl group onto the adenine at position 37 in tRNAs that read codons beginning with uridine, leading to the formation of N6-(dimethylallyl)adenosine (i(6)A). In Bifidobacterium adolescentis (strain ATCC 15703 / DSM 20083 / NCTC 11814 / E194a), this protein is tRNA dimethylallyltransferase.